The following is a 369-amino-acid chain: Tsukushi (369 aa).

The first 19 residues, 1-19 (MQFLAWFNMLLLLPCFSTT), serve as a signal peptide directing secretion. The region spanning 20–60 (KTCFPGCHCEVESFGLFDSFSLTKVDCSGIGSHIVPVPIPL) is the LRRNT domain. LRR repeat units follow at residues 61–81 (DTSYLDLSSNKLETINESMLT), 87–108 (TLVSLDLSYNNIAKISSTTFSR), 111–132 (YLESLDLSHNSLEVLPEDCFSS), 134–155 (PLGDIDLSNNKLLDIALDVFAS), 161–181 (PLNVDLSNNMLSKITRNHEKS), 184–205 (NIQNLNLSGNRLTSVPNLQGIP), 206–226 (LRYLNLDGNPLAKIEKGDFKG), 229–248 (GLIHLSLSGLHDFRELSPYS), 254–276 (ALQVLDLSNNPNLRSLTAEVIFG), 279–300 (SIQELNLSGTGVSSLPKTVLKY), and 303–323 (SLKSITLRKNIQCFKTIKEGQ). An N-linked (GlcNAc...) asparagine glycan is attached at Asn76. Asn189 carries an N-linked (GlcNAc...) asparagine glycan. Residue Asn284 is glycosylated (N-linked (GlcNAc...) asparagine).

In terms of assembly, forms a ternary complex with chordin/CHRD and BMP4. Interacts with FZD4 (via FZ domain); competes with WNT2B for binding to FZD4, inhibiting Wnt signaling and repressing peripheral eye development. Interacts with BMP4; shows stronger interaction with BMP4 than isoform 2. Interacts with DVR1/VG1; the interaction is inhibited by BMP4. Interacts with BMP7. As to quaternary structure, interacts with FZD4 (via FZ domain); competes with WNT2B for binding to FZD4, inhibiting Wnt signaling and repressing peripheral eye development. Interacts with BMP4; shows weaker interaction with BMP4 than isoform 1. Interacts with DVR1/VG1; the interaction is inhibited by BMP4. Interacts with BMP7. N-glycosylated. During embryonic development, expressed in the middle primitive streak and Hensen's node. Expressed in the peripheral region of the developing eye. Expressed in the presomitic mesoderm during somitogenesis in a NOTCH-dependent manner.

It localises to the secreted. In terms of biological role, contributes to various developmental events through its interactions with multiple signaling pathways. Dorsalizing factor involved in the induction of Hensen's node by inhibiting bone morphogenetic proteins during gastrulation and by enhancing DVR1/VG1 activity. Wnt signaling inhibitor which competes with WNT2B for binding to Wnt receptor FZD4 and represses WNT2B-dependent development of the peripheral eye. Shows strong bone morphogenetic protein antagonistic activity. Its function is as follows. Shows weak bone morphogenetic protein antagonistic activity. This chain is Tsukushi (TSKU), found in Gallus gallus (Chicken).